Reading from the N-terminus, the 940-residue chain is Coatomer subunit beta (940 aa).

4 HEAT repeats span residues 11–48 (FLEA…NGDS), 90–125 (QEMI…KEPE), 126–162 (LLDP…VSNH), and 310–347 (SILE…SRNV).

Oligomeric complex that consists of at least the alpha, beta, beta', gamma, delta, epsilon and zeta subunits.

It localises to the cytoplasm. It is found in the golgi apparatus membrane. The protein localises to the cytoplasmic vesicle. The protein resides in the COPI-coated vesicle membrane. In terms of biological role, the coatomer is a cytosolic protein complex that binds to dilysine motifs and reversibly associates with Golgi non-clathrin-coated vesicles, which further mediate biosynthetic protein transport from the ER, via the Golgi up to the trans Golgi network. Coatomer complex is required for budding from Golgi membranes, and is essential for the retrograde Golgi-to-ER transport of dilysine-tagged proteins. The chain is Coatomer subunit beta (sec26) from Schizosaccharomyces pombe (strain 972 / ATCC 24843) (Fission yeast).